The following is a 511-amino-acid chain: Maturase K (511 aa).

Belongs to the intron maturase 2 family. MatK subfamily.

It localises to the plastid. The protein localises to the chloroplast. Its function is as follows. Usually encoded in the trnK tRNA gene intron. Probably assists in splicing its own and other chloroplast group II introns. The sequence is that of Maturase K from Chloranthus spicatus (Chulantree).